A 471-amino-acid chain; its full sequence is UTP--glucose-1-phosphate uridylyltransferase (471 aa).

Residues L87–G90, K101, Q164, and G193 each bind UTP. A substrate-binding site is contributed by G89 to G90. Substrate is bound by residues H194 and N222 to D224. 2 residues coordinate UTP: D224 and K362.

This sequence belongs to the UDPGP type 1 family.

It localises to the cytoplasm. The catalysed reaction is alpha-D-glucose 1-phosphate + UTP + H(+) = UDP-alpha-D-glucose + diphosphate. Plays a central role as a glucosyl donor in cellular metabolic pathways. This chain is UTP--glucose-1-phosphate uridylyltransferase (UGP), found in Astragalus penduliflorus (Mountain lentil).